The sequence spans 410 residues: Tryptophan synthase beta chain (410 aa).

The residue at position 99 (K99) is an N6-(pyridoxal phosphate)lysine.

Belongs to the TrpB family. Tetramer of two alpha and two beta chains. Pyridoxal 5'-phosphate serves as cofactor.

The enzyme catalyses (1S,2R)-1-C-(indol-3-yl)glycerol 3-phosphate + L-serine = D-glyceraldehyde 3-phosphate + L-tryptophan + H2O. It functions in the pathway amino-acid biosynthesis; L-tryptophan biosynthesis; L-tryptophan from chorismate: step 5/5. Its function is as follows. The beta subunit is responsible for the synthesis of L-tryptophan from indole and L-serine. The polypeptide is Tryptophan synthase beta chain (Pseudomonas fluorescens (strain Pf0-1)).